Consider the following 167-residue polypeptide: Ribosome maturation factor RimM (167 aa).

The PRC barrel domain maps to 94 to 167 (EENEYFIKDL…VMVVHLLEGL (74 aa)).

The protein belongs to the RimM family. Binds ribosomal protein uS19.

It is found in the cytoplasm. In terms of biological role, an accessory protein needed during the final step in the assembly of 30S ribosomal subunit, possibly for assembly of the head region. Essential for efficient processing of 16S rRNA. May be needed both before and after RbfA during the maturation of 16S rRNA. It has affinity for free ribosomal 30S subunits but not for 70S ribosomes. This Thermoanaerobacter pseudethanolicus (strain ATCC 33223 / 39E) (Clostridium thermohydrosulfuricum) protein is Ribosome maturation factor RimM.